The following is a 95-amino-acid chain: UPF0358 protein GTNG_0942 (95 aa).

The protein belongs to the UPF0358 family.

The chain is UPF0358 protein GTNG_0942 from Geobacillus thermodenitrificans (strain NG80-2).